We begin with the raw amino-acid sequence, 146 residues long: Interleukin-13 (146 aa).

The signal sequence occupies residues 1–24 (MHPLLNPLLLALGLMALLLTTVIA). N-linked (GlcNAc...) asparagine glycosylation is found at asparagine 52, asparagine 63, asparagine 71, and asparagine 86. Intrachain disulfides connect cysteine 62–cysteine 90 and cysteine 78–cysteine 104.

It belongs to the IL-4/IL-13 family. As to quaternary structure, interacts with IL13RA2.

The protein localises to the secreted. Cytokine that plays important roles in allergic inflammation and immune response to parasite infection. Synergizes with IL2 in regulating interferon-gamma synthesis. Stimulates B-cell proliferation, and activation of eosinophils, basophils, and mast cells. Plays an important role in controlling IL33 activity by modulating the production of transmembrane and soluble forms of interleukin-1 receptor-like 1/IL1RL1. Displays the capacity to antagonize Th1-driven proinflammatory immune response and downregulates synthesis of many proinflammatory cytokines including IL1, IL6, IL10, IL12 and TNF-alpha through a mechanism that partially involves suppression of NF-kappa-B. Also functions on nonhematopoietic cells, including endothelial cells where it induces vascular cell adhesion protein 1/VCAM1, which is important in the recruitment of eosinophils. Exerts its biological effects through its receptors which comprises the IL4R chain and the IL13RA1 chain, to activate JAK1 and TYK2, leading to the activation of STAT6. Aside from IL13RA1, another receptor IL13RA2 acts as a high affinity decoy for IL13 and mediates internalization and depletion of extracellular IL13. The protein is Interleukin-13 (IL13) of Homo sapiens (Human).